A 908-amino-acid chain; its full sequence is Mechanosensitive ion channel protein 8 (908 aa).

A compositionally biased stretch (polar residues) spans 1–25; that stretch reads MDFRNSFKSHSSYKQIRSPGDQSEP. Disordered regions lie at residues 1–88, 148–172, 190–221, and 242–265; these read MDFR…HTAV, DQEN…SFDA, VAGS…LQEE, and VKTR…WRSG. A compositionally biased stretch (basic and acidic residues) spans 31-70; that stretch reads PILHDHHPDHSGMVVDDQKPDSTRSSLDDGRNAPVERDAS. 2 stretches are compositionally biased toward polar residues: residues 75–85 and 156–171; these read QDNTTGTSTDH and HQTM…TSFD. A compositionally biased stretch (low complexity) spans 196 to 206; it reads SSSSHSSSSSS. Positions 207–218 are enriched in polar residues; the sequence is ATMRTNQDQPQL. The segment covering 247 to 256 has biased composition (basic and acidic residues); that stretch reads RLQDPPREEE. The next 6 helical transmembrane spans lie at 298–318, 341–361, 381–401, 411–431, 673–693, and 709–729; these read AITL…ACSL, LVLI…VFFI, AVQN…LFDK, FLPY…LWLI, MINI…LEIA, and AFIF…LFIV.

The protein belongs to the MscS (TC 1.A.23) family. In terms of tissue distribution, expressed in tricellular and mature pollen, and in germinating tube. Not detected in leaves or roots.

It is found in the cell membrane. Its subcellular location is the endomembrane system. Its activity is regulated as follows. Not regulated by MgCl(2), ruthenium red or tetramethylammonium-Cl. Functionally, mechanosensitive channel that opens in response to stretch forces in the membrane lipid bilayer. Exhibits a 6.3-fold preference for chloride over sodium. Regulates osmotic forces during pollen hydration and germination. The sequence is that of Mechanosensitive ion channel protein 8 from Arabidopsis thaliana (Mouse-ear cress).